A 380-amino-acid polypeptide reads, in one-letter code: Lipid-A-disaccharide synthase (380 aa).

It belongs to the LpxB family.

The enzyme catalyses a lipid X + a UDP-2-N,3-O-bis[(3R)-3-hydroxyacyl]-alpha-D-glucosamine = a lipid A disaccharide + UDP + H(+). It participates in bacterial outer membrane biogenesis; LPS lipid A biosynthesis. Its function is as follows. Condensation of UDP-2,3-diacylglucosamine and 2,3-diacylglucosamine-1-phosphate to form lipid A disaccharide, a precursor of lipid A, a phosphorylated glycolipid that anchors the lipopolysaccharide to the outer membrane of the cell. The polypeptide is Lipid-A-disaccharide synthase (Pseudomonas syringae pv. syringae (strain B728a)).